Consider the following 333-residue polypeptide: Cytochrome f (333 aa).

The first 44 residues, 1-44 (MRNASVTARLTRSVRAIVKTLLIAIATVTFYFSCDLALPQSAAA), serve as a signal peptide directing secretion. Residues tyrosine 45, cysteine 66, cysteine 69, and histidine 70 each contribute to the heme site. A helical transmembrane segment spans residues 301-318 (GLIAFVALVMLAQVMLVL).

It belongs to the cytochrome f family. In terms of assembly, the 4 large subunits of the cytochrome b6-f complex are cytochrome b6, subunit IV (17 kDa polypeptide, PetD), cytochrome f and the Rieske protein, while the 4 small subunits are PetG, PetL, PetM and PetN. The complex functions as a dimer. Requires heme as cofactor.

The protein resides in the cellular thylakoid membrane. Functionally, component of the cytochrome b6-f complex, which mediates electron transfer between photosystem II (PSII) and photosystem I (PSI), cyclic electron flow around PSI, and state transitions. The chain is Cytochrome f (petA) from Desmonostoc sp. (strain PCC 7906) (Nostoc sp. (strain PCC 7906)).